The chain runs to 171 residues: GTP-dependent dephospho-CoA kinase (171 aa).

GTP contacts are provided by D49, V51, D68, and E122.

It belongs to the GTP-dependent DPCK family.

It carries out the reaction 3'-dephospho-CoA + GTP = GDP + CoA + H(+). It participates in cofactor biosynthesis; coenzyme A biosynthesis. Functionally, catalyzes the GTP-dependent phosphorylation of the 3'-hydroxyl group of dephosphocoenzyme A to form coenzyme A (CoA). This is GTP-dependent dephospho-CoA kinase from Hyperthermus butylicus (strain DSM 5456 / JCM 9403 / PLM1-5).